We begin with the raw amino-acid sequence, 878 residues long: Alanine--tRNA ligase (878 aa).

H567, H571, C668, and H672 together coordinate Zn(2+).

This sequence belongs to the class-II aminoacyl-tRNA synthetase family. Zn(2+) serves as cofactor.

It is found in the cytoplasm. The enzyme catalyses tRNA(Ala) + L-alanine + ATP = L-alanyl-tRNA(Ala) + AMP + diphosphate. Catalyzes the attachment of alanine to tRNA(Ala) in a two-step reaction: alanine is first activated by ATP to form Ala-AMP and then transferred to the acceptor end of tRNA(Ala). Also edits incorrectly charged Ser-tRNA(Ala) and Gly-tRNA(Ala) via its editing domain. This is Alanine--tRNA ligase from Magnetococcus marinus (strain ATCC BAA-1437 / JCM 17883 / MC-1).